A 281-amino-acid polypeptide reads, in one-letter code: MNQKIFLCSICNINSGTCNEDCKFCSQSVRYKADIDRYKQKEISLILKEAQDAYSNGALGFCLVTSDKGLNDKTLNFVCSIAEVLSKELPELRLIACNGTATIEQLLTLRASGIKAYNHNLETSREFYPKICTTHSWDERYETCQNINNAGLVLISGGIFGLGEREEDRVSMLKSLDSLKPTSVPINFYHHNEALELSPNPLSVDEALSLIKLTRAMIPDAQRIMVAGGRELMFGDRESEIFANGANSIVIGNYLTTSGKAMQRDLEMLKSLNLDVASSVK.

Positions 1-230 (MNQKIFLCSI…AQRIMVAGGR (230 aa)) constitute a Radical SAM core domain. Positions 18, 22, and 25 each coordinate [4Fe-4S] cluster. The [2Fe-2S] cluster site is built by cysteine 62, cysteine 97, and arginine 223.

It belongs to the radical SAM superfamily. Biotin synthase family. As to quaternary structure, homodimer. [4Fe-4S] cluster serves as cofactor. [2Fe-2S] cluster is required as a cofactor.

The enzyme catalyses (4R,5S)-dethiobiotin + (sulfur carrier)-SH + 2 reduced [2Fe-2S]-[ferredoxin] + 2 S-adenosyl-L-methionine = (sulfur carrier)-H + biotin + 2 5'-deoxyadenosine + 2 L-methionine + 2 oxidized [2Fe-2S]-[ferredoxin]. It functions in the pathway cofactor biosynthesis; biotin biosynthesis; biotin from 7,8-diaminononanoate: step 2/2. In terms of biological role, catalyzes the conversion of dethiobiotin (DTB) to biotin by the insertion of a sulfur atom into dethiobiotin via a radical-based mechanism. The polypeptide is Biotin synthase (Sulfurimonas denitrificans (strain ATCC 33889 / DSM 1251) (Thiomicrospira denitrificans (strain ATCC 33889 / DSM 1251))).